Here is a 188-residue protein sequence, read N- to C-terminus: Acireductone dioxygenase (188 aa).

Positions 1 to 20 (MSRLRIFADSNPTTPHFDSR) are disordered. Residues His-97, His-99, Glu-103, and His-141 each coordinate Fe(2+). Ni(2+)-binding residues include His-97, His-99, Glu-103, and His-141.

The protein belongs to the acireductone dioxygenase (ARD) family. As to quaternary structure, monomer. Fe(2+) serves as cofactor. Ni(2+) is required as a cofactor.

The enzyme catalyses 1,2-dihydroxy-5-(methylsulfanyl)pent-1-en-3-one + O2 = 3-(methylsulfanyl)propanoate + CO + formate + 2 H(+). It catalyses the reaction 1,2-dihydroxy-5-(methylsulfanyl)pent-1-en-3-one + O2 = 4-methylsulfanyl-2-oxobutanoate + formate + 2 H(+). It functions in the pathway amino-acid biosynthesis; L-methionine biosynthesis via salvage pathway; L-methionine from S-methyl-5-thio-alpha-D-ribose 1-phosphate: step 5/6. Its function is as follows. Catalyzes 2 different reactions between oxygen and the acireductone 1,2-dihydroxy-3-keto-5-methylthiopentene (DHK-MTPene) depending upon the metal bound in the active site. Fe-containing acireductone dioxygenase (Fe-ARD) produces formate and 2-keto-4-methylthiobutyrate (KMTB), the alpha-ketoacid precursor of methionine in the methionine recycle pathway. Ni-containing acireductone dioxygenase (Ni-ARD) produces methylthiopropionate, carbon monoxide and formate, and does not lie on the methionine recycle pathway. The protein is Acireductone dioxygenase of Xanthomonas campestris pv. campestris (strain 8004).